A 364-amino-acid chain; its full sequence is Lytic cellulose monooxygenase (364 aa).

An N-terminal signal peptide occupies residues 1-34 (MARRSRYISLAAVMATLLSALGVTFLLGQGRAEA). Residues histidine 35 and histidine 144 each contribute to the Cu cation site. One can recognise a Chitin-binding type-4 domain in the interval 35–225 (HGVAMMPGSR…QENFFSCSDV (191 aa)). Residues 234 to 261 (VTGIRGSGGTPTPTPTPTTPPTTPPPTH) form a disordered region. A compositionally biased stretch (pro residues) spans 245 to 260 (TPTPTPTTPPTTPPPT). The CBM2 domain maps to 258-364 (PPTHSGSCMA…PVGTIGCVAP (107 aa)).

It depends on Cu(2+) as a cofactor.

The protein localises to the secreted. It carries out the reaction [(1-&gt;4)-beta-D-glucosyl]n+m + reduced acceptor + O2 = [(1-&gt;4)-beta-D-glucosyl]m-1-(1-&gt;4)-D-glucono-1,5-lactone + [(1-&gt;4)-beta-D-glucosyl]n + acceptor + H2O.. It participates in glycan metabolism; cellulose degradation. Functionally, involved in the degradation of lignocellulosic biomass. Catalyzes the oxidative cleavage of glycosidic bonds in cellulosic substrates via a copper-dependent mechanism. Degrades phosphoric acid swollen cellulose (PASC) to oxidized cellooligosaccharides with degrees of polymerization of 4-8. Also shows activity on agricultural fiber paper pulps such as flax pulp. Is not active on chitin. The polypeptide is Lytic cellulose monooxygenase (Streptomyces ambofaciens (strain ATCC 23877 / 3486 / DSM 40053 / JCM 4204 / NBRC 12836 / NRRL B-2516)).